Reading from the N-terminus, the 286-residue chain is MDVSIPKSQHKTVCRTEYGTLQKVILCKPEHMTIKDVINETQKHFEDDNIHVKTANDQHSRLVEALRSHNVEVVLLPVRDGLPEQVFTRDIGFVIGEKAFLSSMTEPIRQGEEAVIKDFFHSQGISYTRMLDTSIEGGDVIIDDDIVYVGISQRTDISAIGQLEEALPEYTIVPVKLHEKFLHLDCVFNIISESEALIYSQAIEPDAADMLAKRYDLIEVPEDEQFTLGTNVLSIGKKTIISLPGNRHVNQQLSKRGYHIIEIDLSEIIKSGGSFRCCTMPLIRGE.

Residue His-183 is the Proton donor of the active site. Cys-277 (nucleophile) is an active-site residue.

Belongs to the DDAH family.

This is an uncharacterized protein from Bacillus subtilis (strain 168).